The primary structure comprises 142 residues: MLDIQQIQQIIPHRYPFLLVDRIVEVEEGKRAVGIKNVSANEQFFVGHFPEYPVMPGVLIVEALAQVGAVAMLMKEENRGRLAFFTGIDNCRFKKQVKPGDQLRLEVEMIRFKGAIGKGKGIATVDGELVCETEMMFALGEK.

Histidine 48 is an active-site residue.

Belongs to the thioester dehydratase family. FabZ subfamily.

It localises to the cytoplasm. The enzyme catalyses a (3R)-hydroxyacyl-[ACP] = a (2E)-enoyl-[ACP] + H2O. Functionally, involved in unsaturated fatty acids biosynthesis. Catalyzes the dehydration of short chain beta-hydroxyacyl-ACPs and long chain saturated and unsaturated beta-hydroxyacyl-ACPs. In Anoxybacillus flavithermus (strain DSM 21510 / WK1), this protein is 3-hydroxyacyl-[acyl-carrier-protein] dehydratase FabZ.